A 253-amino-acid chain; its full sequence is Ras-like protein family member 11A-like (253 aa).

GTP contacts are provided by residues 43–50 (GASNVGKT), 90–97 (DTPCVSLQ), and 157–160 (NKSD). Residues 213 to 233 (GNGEKRKGGLHLARPKSPNMQ) form a disordered region.

The protein belongs to the small GTPase superfamily. Ras family.

It localises to the nucleus. The protein resides in the nucleolus. It carries out the reaction GTP + H2O = GDP + phosphate + H(+). In terms of biological role, regulator of rDNA transcription. The polypeptide is Ras-like protein family member 11A-like (Danio rerio (Zebrafish)).